Here is a 2002-residue protein sequence, read N- to C-terminus: Methylcytosine dioxygenase TET2 (2002 aa).

A compositionally biased stretch (basic and acidic residues) spans 1–11; it reads MEQDRTNHVEG. The disordered stretch occupies residues 1–22; sequence MEQDRTNHVEGNRLSPFLIPSP. Residues S15, S75, and S99 each carry the phosphoserine modification. Basic and acidic residues predominate over residues 113 to 124; sequence KQDQKANGERRN. Disordered regions lie at residues 113 to 154, 266 to 287, 349 to 368, 390 to 488, 703 to 748, 930 to 949, and 1075 to 1095; these read KQDQ…VSSV, HPSH…LPPK, GEEF…GSSE, DSFS…VNRN, LNQQ…QQKL, VPDQ…TQKH, and DSHT…PTKR. 2 stretches are compositionally biased toward polar residues: residues 126-143 and 267-283; these read GVSQ…NVSD and PSHT…SNSE. Over residues 397–416 the composition is skewed to pro residues; it reads TPPPPSQLLLSPPPPLPQVP. Composition is skewed to polar residues over residues 479 to 488 and 703 to 718; these read RPQNNCVNRN and LNQQ…NSHL. Over residues 731-748 the composition is skewed to low complexity; sequence QPSQSSHLPQNQQQQQKL. Polar residues-rich tracts occupy residues 935-944 and 1081-1095; these read GSHTQTPPQK and LEQQ…PTKR. S1107 and S1109 each carry phosphoserine. Residues C1133, C1135, C1193, H1219, and C1221 each contribute to the Zn(2+) site. Residue R1261 participates in 2-oxoglutarate binding. Zn(2+) is bound by residues C1271, C1273, C1289, and C1298. The segment at 1290–1303 is interaction with DNA; it reads SWSMYYNGCKFARS. K1299 is covalently cross-linked (Glycyl lysine isopeptide (Lys-Gly) (interchain with G-Cter in ubiquitin)). C1358 lines the Zn(2+) pocket. C1374 is a binding site for 2-oxoglutarate. Position 1380 (H1380) interacts with Zn(2+). Fe cation is bound by residues H1382 and D1384. N1387 provides a ligand contact to substrate. Residue H1416 participates in 2-oxoglutarate binding. 2 disordered regions span residues 1475-1507 and 1521-1587; these read AAEK…NASQ and VMQQ…HTSD. Over residues 1477–1487 the composition is skewed to low complexity; it reads EKLSSLENSSN. The span at 1496-1507 shows a compositional bias: polar residues; the sequence is PSRTKQTENASQ. 2 stretches are compositionally biased toward low complexity: residues 1523 to 1532 and 1539 to 1551; these read QQSQQPQPLQ and QQQQ…QPHH. The segment covering 1554-1568 has biased composition (polar residues); sequence TESVNSYSASGSTNP. R1682 carries the asymmetric dimethylarginine modification. Fe cation is bound at residue H1881. Residue 1896-1898 participates in 2-oxoglutarate binding; the sequence is RIS. 1902 to 1904 contributes to the substrate binding site; that stretch reads YQH. Position 1912 (H1912) interacts with Zn(2+). The interval 1932–1961 is disordered; sequence CEKYGPDYVPQKSHGKKVKREPAEPHETSE. Basic and acidic residues predominate over residues 1951-1960; it reads REPAEPHETS.

Belongs to the TET family. In terms of assembly, interacts with HCFC1. Interacts with OGT. Interacts with PROSER1; this interaction mediates TET2 O-GlcNAcylation and stability by promoting the interaction between OGT and TET2. Directly interacts (via C-terminus) with the DCAF1 component of the CRL4(VprBP) E3 ubiquitin-protein ligase complex. Fe(2+) is required as a cofactor. It depends on Zn(2+) as a cofactor. In terms of processing, may be glycosylated. It is unclear whether interaction with OGT leads to GlcNAcylation. According to a report, it is not GlcNAcylated by OGT. In contrast, another group reports GlcNAcylation by OGT in mouse ortholog. Monoubiquitinated at Lys-1299 by the DCX (DDB1-CUL4-X-box) E3 ubiquitin-protein ligase complex called CRL4(VprBP) or CUL4A-RBX1-DDB1-DCAF1/VPRBP complex; this modification promotes binding to DNA. Post-translationally, acetylated. Deacetylase HDAC6 acts as a valine sensor by binding to valine through its primate-specific SE14 repeat region and deacetylates TET2 following valine deprivation which promotes TET2-dependent DNA demethylation. As to expression, broadly expressed. Highly expressed in hematopoietic cells; highest expression observed in granulocytes. Expression is reduced in granulocytes from peripheral blood of patients affected by myelodysplastic syndromes.

It is found in the nucleus. It localises to the chromosome. It carries out the reaction a 5-methyl-2'-deoxycytidine in DNA + 2-oxoglutarate + O2 = a 5-hydroxymethyl-2'-deoxycytidine in DNA + succinate + CO2. The catalysed reaction is a 5-hydroxymethyl-2'-deoxycytidine in DNA + 2-oxoglutarate + O2 = a 5-formyl-2'-deoxycytidine in DNA + succinate + CO2 + H2O. It catalyses the reaction a 5-formyl-2'-deoxycytidine in DNA + 2-oxoglutarate + O2 = a 5-carboxyl-2'-deoxycytidine in DNA + succinate + CO2 + H(+). In terms of biological role, dioxygenase that catalyzes the conversion of the modified genomic base 5-methylcytosine (5mC) into 5-hydroxymethylcytosine (5hmC) and plays a key role in active DNA demethylation. Has a preference for 5-hydroxymethylcytosine in CpG motifs. Also mediates subsequent conversion of 5hmC into 5-formylcytosine (5fC), and conversion of 5fC to 5-carboxylcytosine (5caC). Conversion of 5mC into 5hmC, 5fC and 5caC probably constitutes the first step in cytosine demethylation. Methylation at the C5 position of cytosine bases is an epigenetic modification of the mammalian genome which plays an important role in transcriptional regulation. In addition to its role in DNA demethylation, also involved in the recruitment of the O-GlcNAc transferase OGT to CpG-rich transcription start sites of active genes, thereby promoting histone H2B GlcNAcylation by OGT. This is Methylcytosine dioxygenase TET2 (TET2) from Homo sapiens (Human).